The chain runs to 328 residues: GMP reductase (328 aa).

Residue Cys-174 is the Thioimidate intermediate of the active site. An NADP(+)-binding site is contributed by 203–226; sequence IIADGGIRTHGDIAKSIRFGASMV.

Belongs to the IMPDH/GMPR family. GuaC type 2 subfamily.

The enzyme catalyses IMP + NH4(+) + NADP(+) = GMP + NADPH + 2 H(+). Its function is as follows. Catalyzes the irreversible NADPH-dependent deamination of GMP to IMP. It functions in the conversion of nucleobase, nucleoside and nucleotide derivatives of G to A nucleotides, and in maintaining the intracellular balance of A and G nucleotides. This is GMP reductase from Staphylococcus saprophyticus subsp. saprophyticus (strain ATCC 15305 / DSM 20229 / NCIMB 8711 / NCTC 7292 / S-41).